A 659-amino-acid polypeptide reads, in one-letter code: PAN2-PAN3 deadenylation complex subunit PAN3 (659 aa).

Disordered stretches follow at residues 1–26 (MASAGKPALDDSRRGTGSPKMKAREN) and 103–132 (PKAANAAPFQPRSVASRSNTSTPNSRQENI). The C3H1-type zinc finger occupies 26–55 (NAKDTLCRNVTIYGRCRYEDKGCAFNHDPL). Residues 115–132 (SVASRSNTSTPNSRQENI) are compositionally biased toward polar residues. The tract at residues 262-522 (QTLPNTQLPA…NIDIFITGIS (261 aa)) is pseudokinase domain. ATP is bound by residues Arg314, 363-370 (DYYPLSKT), and 422-423 (SK). A coiled-coil region spans residues 523-561 (SQLMSTFDSALHLDDQLTSDLSRELENGRLVRLMTKLNL). The segment at 562–659 (VNERPEYEHD…ALLKPARRMH (98 aa)) is knob domain.

Belongs to the protein kinase superfamily. PAN3 family. As to quaternary structure, homodimer. Forms a heterotrimer with a catalytic subunit pan2 to form the poly(A)-nuclease (PAN) deadenylation complex. Interacts (via PAM-2 motif) with poly(A)-binding protein pab1 (via PABC domain), conferring substrate specificity of the enzyme complex.

Its subcellular location is the cytoplasm. Functionally, regulatory subunit of the poly(A)-nuclease (PAN) deadenylation complex, one of two cytoplasmic mRNA deadenylases involved in mRNA turnover. PAN specifically shortens poly(A) tails of RNA and the activity is stimulated by poly(A)-binding protein pab1. PAN deadenylation is followed by rapid degradation of the shortened mRNA tails by the CCR4-NOT complex. Deadenylated mRNAs are then degraded by two alternative mechanisms, namely exosome-mediated 3'-5' exonucleolytic degradation, or deadenylation-dependent mRNA decaping and subsequent 5'-3' exonucleolytic degradation by xrn1. May also be involved in post-transcriptional maturation of mRNA poly(A) tails. pan3 acts as a positive regulator for PAN activity, recruiting the catalytic subunit pan2 to mRNA via its interaction with RNA and with pab1. This chain is PAN2-PAN3 deadenylation complex subunit PAN3, found in Aspergillus clavatus (strain ATCC 1007 / CBS 513.65 / DSM 816 / NCTC 3887 / NRRL 1 / QM 1276 / 107).